The sequence spans 359 residues: Peptide chain release factor 1 (359 aa).

Residue Q236 is modified to N5-methylglutamine.

The protein belongs to the prokaryotic/mitochondrial release factor family. Post-translationally, methylated by PrmC. Methylation increases the termination efficiency of RF1.

The protein resides in the cytoplasm. Its function is as follows. Peptide chain release factor 1 directs the termination of translation in response to the peptide chain termination codons UAG and UAA. The protein is Peptide chain release factor 1 of Streptococcus pyogenes serotype M12 (strain MGAS2096).